A 469-amino-acid polypeptide reads, in one-letter code: Putative diacyglycerol O-acyltransferase MT0231 (469 aa).

The active-site Proton acceptor is the His139.

The protein belongs to the long-chain O-acyltransferase family.

The enzyme catalyses an acyl-CoA + a 1,2-diacyl-sn-glycerol = a triacyl-sn-glycerol + CoA. Its pathway is glycerolipid metabolism; triacylglycerol biosynthesis. This chain is Putative diacyglycerol O-acyltransferase MT0231, found in Mycobacterium tuberculosis (strain CDC 1551 / Oshkosh).